The following is a 229-amino-acid chain: Cytidylate kinase (229 aa).

12 to 20 (GPSGTGKSS) contributes to the ATP binding site.

Belongs to the cytidylate kinase family. Type 1 subfamily.

The protein localises to the cytoplasm. The catalysed reaction is CMP + ATP = CDP + ADP. The enzyme catalyses dCMP + ATP = dCDP + ADP. The polypeptide is Cytidylate kinase (Rhodococcus opacus (strain B4)).